We begin with the raw amino-acid sequence, 228 residues long: Type II methyltransferase M.HhaII (228 aa).

This sequence belongs to the N(4)/N(6)-methyltransferase family.

It catalyses the reaction a 2'-deoxyadenosine in DNA + S-adenosyl-L-methionine = an N(6)-methyl-2'-deoxyadenosine in DNA + S-adenosyl-L-homocysteine + H(+). In terms of biological role, a beta subtype methylase, recognizes the double-stranded sequence 5'-GANTC-3', methylates A-2 on both strands, and protects the DNA from cleavage by the HhaII endonuclease. The protein is Type II methyltransferase M.HhaII of Haemophilus parahaemolyticus.